We begin with the raw amino-acid sequence, 416 residues long: Solute carrier family 25 member 46 (416 aa).

The segment covering Met-1–Glu-13 has biased composition (basic and acidic residues). The interval Met-1–Gly-91 is disordered. Residues Ser-37–Val-49 are compositionally biased toward polar residues. The segment covering Gly-82 to Gly-91 has biased composition (low complexity). One copy of the Solcar 1 repeat lies at His-94–Pro-185. A run of 6 helical transmembrane segments spans residues Phe-101–Leu-121, Met-161–Phe-181, Ile-197–Ala-217, Leu-256–Ile-276, Phe-312–Leu-332, and Leu-381–Leu-401. The Solcar 2 repeat unit spans residues Glu-309–Thr-414.

It belongs to the mitochondrial carrier (TC 2.A.29) family.

It localises to the mitochondrion outer membrane. May play a role in mitochondrial dynamics by controlling mitochondrial membrane fission. This is Solute carrier family 25 member 46 (slc25a46) from Xenopus tropicalis (Western clawed frog).